The chain runs to 121 residues: Parathyroid hormone 4 (121 aa).

Residues 1–24 (MLKMQRSQQRVALMMLMVVAAVHC) form the signal peptide. The propeptide occupies 25–29 (QESES). The disordered stretch occupies residues 77-97 (RSRGAQLYSQPGREESSGGQK).

This sequence belongs to the parathyroid hormone family. In terms of tissue distribution, specifically expressed in a bilateral cluster of neurons in the dorsal region of the periventricular hypothalamus. Their axons project through the midbrain and hindbrain and down the spinal cord.

It localises to the secreted. Its function is as follows. Neuroendocrine peptide which is produced by a subset of neurons in the hypothalamus. Activates the G-protein coupled receptors pth1ra, pth1rb and pth2r with similar affinity. Receptor binding stimulates intracellular cAMP production. Plays a role in bone mineralization by regulating expression of factors involved in phosphate homeostasis. Important for embryonic bone development. The protein is Parathyroid hormone 4 of Danio rerio (Zebrafish).